A 365-amino-acid polypeptide reads, in one-letter code: U-box domain-containing protein 56 (365 aa).

Residues 176-281 (YEEQRRRLEI…ELLRALEKGE (106 aa)) adopt a coiled-coil conformation. The U-box domain occupies 293–365 (EPPQCFICPI…AIKDWLQQHP (73 aa)).

It carries out the reaction S-ubiquitinyl-[E2 ubiquitin-conjugating enzyme]-L-cysteine + [acceptor protein]-L-lysine = [E2 ubiquitin-conjugating enzyme]-L-cysteine + N(6)-ubiquitinyl-[acceptor protein]-L-lysine.. It functions in the pathway protein modification; protein ubiquitination. Its function is as follows. Functions as an E3 ubiquitin ligase. This chain is U-box domain-containing protein 56 (PUB56), found in Arabidopsis thaliana (Mouse-ear cress).